Consider the following 130-residue polypeptide: MKAFLGFLLLSYLAIILVHDNVNCIIFGIFDPCFYKISSKISNDYSSMQCSHPISYIGYEMFIQKWKDDNYWPLIIRHCCFYLVFSIAFASCVAFAIRRNLHLSTTMKLLGLLSILVWLAQPVLNQPFPT.

3 consecutive transmembrane segments (helical) span residues Phe4–Cys24, Ile75–Phe95, and Leu109–Pro129.

This sequence belongs to the asfivirus MGF 110 family.

Its subcellular location is the host membrane. In terms of biological role, plays a role in virus cell tropism, and may be required for efficient virus replication in macrophages. In Ornithodoros (relapsing fever ticks), this protein is Protein MGF 360-1L.